A 393-amino-acid polypeptide reads, in one-letter code: Decapping nuclease dom-3 (393 aa).

Residues 1 to 37 (MSHYGGNPRGNSSHQFGRKDFQQSDSKHIPKITGQPL) form a disordered region. Residues 17 to 28 (GRKDFQQSDSKH) show a composition bias toward basic and acidic residues. Substrate contacts are provided by residues Arg74, Glu113, and 144–146 (WRG). Mg(2+)-binding residues include Glu205, Glu257, Asp259, Glu269, and Leu270. A substrate-binding site is contributed by Glu257. Substrate is bound by residues Lys271 and Gln293.

Belongs to the DXO/Dom3Z family. Mg(2+) is required as a cofactor.

The catalysed reaction is a 5'-end NAD(+)-phospho-ribonucleoside in mRNA + H2O = a 5'-end phospho-ribonucleoside in mRNA + NAD(+) + H(+). It carries out the reaction a 5'-end (N(7)-methyl 5'-triphosphoguanosine)-ribonucleoside-ribonucleotide in mRNA + H2O = a (N(7)-methyl 5'-triphosphoguanosine)-nucleoside + a 5'-end phospho-ribonucleoside in mRNA + H(+). The enzyme catalyses a 5'-end triphospho-ribonucleoside in mRNA + H2O = a 5'-end phospho-ribonucleoside in mRNA + diphosphate + H(+). In terms of biological role, decapping enzyme for NAD-capped RNAs: specifically hydrolyzes the nicotinamide adenine dinucleotide (NAD) cap from a subset of RNAs by removing the entire NAD moiety from the 5'-end of an NAD-capped RNA. The NAD-cap is present at the 5'-end of some RNAs and snoRNAs. In contrast to the canonical 5'-end N7 methylguanosine (m7G) cap, the NAD cap promotes mRNA decay. Also acts as a non-canonical decapping enzyme that removes the entire cap structure of m7G capped or incompletely capped RNAs and mediates their subsequent degradation. Specifically degrades pre-mRNAs with a defective 5'-end m7G cap and is part of a pre-mRNA capping quality control. Also possesses RNA 5'-pyrophosphohydrolase activity by hydrolyzing the 5'-end triphosphate to release pyrophosphates. The protein is Decapping nuclease dom-3 of Caenorhabditis elegans.